The following is a 46-amino-acid chain: Endochitinase 1A (46 aa).

Belongs to the glycosyl hydrolase 19 family. Chitinase class I subfamily.

It carries out the reaction Random endo-hydrolysis of N-acetyl-beta-D-glucosaminide (1-&gt;4)-beta-linkages in chitin and chitodextrins.. Its function is as follows. Defense against chitin-containing fungal and bacterial pathogens. This Arachis hypogaea (Peanut) protein is Endochitinase 1A.